The chain runs to 141 residues: Large ribosomal subunit protein uL11 (141 aa).

Belongs to the universal ribosomal protein uL11 family. As to quaternary structure, part of the ribosomal stalk of the 50S ribosomal subunit. Interacts with L10 and the large rRNA to form the base of the stalk. L10 forms an elongated spine to which L12 dimers bind in a sequential fashion forming a multimeric L10(L12)X complex. In terms of processing, one or more lysine residues are methylated.

Functionally, forms part of the ribosomal stalk which helps the ribosome interact with GTP-bound translation factors. This Streptococcus suis (strain 98HAH33) protein is Large ribosomal subunit protein uL11.